A 54-amino-acid chain; its full sequence is Salt stress-induced hydrophobic peptide ESI3 (54 aa).

Transmembrane regions (helical) follow at residues 2–22 (GSAT…GVFL) and 34–54 (LLLT…VLVV).

It belongs to the UPF0057 (PMP3) family.

Its subcellular location is the membrane. The protein is Salt stress-induced hydrophobic peptide ESI3 (ESI3) of Thinopyrum elongatum (Tall wheatgrass).